Consider the following 276-residue polypeptide: Phosphatidylglycerol--prolipoprotein diacylglyceryl transferase (276 aa).

The next 3 helical transmembrane spans lie at 17–37, 63–83, and 95–115; these read LAIH…FFLA, ILFL…CLFY, and ILAV…VLAS. R146 serves as a coordination point for a 1,2-diacyl-sn-glycero-3-phospho-(1'-sn-glycerol). The next 3 membrane-spanning stretches (helical) occupy residues 182–202, 209–229, and 235–255; these read SQVY…WLYA, GQVS…AEYF, and FLGI…PMIV.

Belongs to the Lgt family.

Its subcellular location is the cell inner membrane. It carries out the reaction L-cysteinyl-[prolipoprotein] + a 1,2-diacyl-sn-glycero-3-phospho-(1'-sn-glycerol) = an S-1,2-diacyl-sn-glyceryl-L-cysteinyl-[prolipoprotein] + sn-glycerol 1-phosphate + H(+). It functions in the pathway protein modification; lipoprotein biosynthesis (diacylglyceryl transfer). In terms of biological role, catalyzes the transfer of the diacylglyceryl group from phosphatidylglycerol to the sulfhydryl group of the N-terminal cysteine of a prolipoprotein, the first step in the formation of mature lipoproteins. This is Phosphatidylglycerol--prolipoprotein diacylglyceryl transferase from Polaromonas sp. (strain JS666 / ATCC BAA-500).